Reading from the N-terminus, the 317-residue chain is Cytochrome f (317 aa).

Residues 1 to 31 form the signal peptide; sequence MIFKPQSFLKAIVLSMTITFAFNMSAPIASA. Positions 32, 52, 55, and 56 each coordinate heme. A helical transmembrane segment spans residues 280–302; it reads PVRIQGLLAFFACILLAQILLVV.

This sequence belongs to the cytochrome f family. As to quaternary structure, the 4 large subunits of the cytochrome b6-f complex are cytochrome b6, subunit IV (17 kDa polypeptide, petD), cytochrome f and the Rieske protein, while the 4 small subunits are PetG, PetL, PetM and PetN. The complex functions as a dimer. The cofactor is heme.

It is found in the plastid. It localises to the chloroplast thylakoid membrane. Component of the cytochrome b6-f complex, which mediates electron transfer between photosystem II (PSII) and photosystem I (PSI), cyclic electron flow around PSI, and state transitions. The sequence is that of Cytochrome f from Chlamydomonas subcaudata.